The chain runs to 311 residues: MSKTSLVTAFILTGLPHAPGLDAPLFGIFLVVYVLTVLGNLLILLVIRVDSHLHTPMYYFLTNLSFIDMWFSTVTVPKMLMTLVSPSGRAISFHSCVAQLYFFHFLGSTECFLYTVMSYDRYLAISYPLRYTSMMSGSRCALLATSTWLSGSLHSAVQTILTFHLPYCGPNQIQHYLCDAPPILKLACADTSANEMVIFVDIGLVASGCFLLIVLSYVSIVCSILRIHTSEGRHRAFQTCASHCIVVLCFFVPCVFIYLRPGSRDVVDGVVAIFYTVLTPLLNPVVYTLRNKEVKKAVLKLRDKVAHSQGE.

The Extracellular portion of the chain corresponds to 1–23; it reads MSKTSLVTAFILTGLPHAPGLDA. The chain crosses the membrane as a helical span at residues 24–44; that stretch reads PLFGIFLVVYVLTVLGNLLIL. The Cytoplasmic segment spans residues 45 to 52; that stretch reads LVIRVDSH. A helical membrane pass occupies residues 53–73; that stretch reads LHTPMYYFLTNLSFIDMWFST. The Extracellular portion of the chain corresponds to 74 to 98; that stretch reads VTVPKMLMTLVSPSGRAISFHSCVA. Cysteines 96 and 188 form a disulfide. Residues 99 to 119 form a helical membrane-spanning segment; the sequence is QLYFFHFLGSTECFLYTVMSY. Over 120-138 the chain is Cytoplasmic; sequence DRYLAISYPLRYTSMMSGS. Residues 139–159 form a helical membrane-spanning segment; it reads RCALLATSTWLSGSLHSAVQT. Topologically, residues 160–196 are extracellular; that stretch reads ILTFHLPYCGPNQIQHYLCDAPPILKLACADTSANEM. A helical membrane pass occupies residues 197 to 216; the sequence is VIFVDIGLVASGCFLLIVLS. At 217–236 the chain is on the cytoplasmic side; that stretch reads YVSIVCSILRIHTSEGRHRA. The helical transmembrane segment at 237–257 threads the bilayer; sequence FQTCASHCIVVLCFFVPCVFI. The Extracellular portion of the chain corresponds to 258–268; the sequence is YLRPGSRDVVD. Residues 269–289 traverse the membrane as a helical segment; the sequence is GVVAIFYTVLTPLLNPVVYTL. The Cytoplasmic portion of the chain corresponds to 290–311; the sequence is RNKEVKKAVLKLRDKVAHSQGE.

The protein belongs to the G-protein coupled receptor 1 family.

The protein resides in the cell membrane. Its function is as follows. Odorant receptor. The chain is Olfactory receptor 10G9 (OR10G9) from Homo sapiens (Human).